A 359-amino-acid polypeptide reads, in one-letter code: Protein Wnt-5b (359 aa).

Positions 1 to 17 (MPSLLLVVVAALLSSWA) are cleaved as a signal peptide. An intrachain disulfide couples Cys83 to Cys94. N-linked (GlcNAc...) asparagine glycosylation is found at Asn93 and Asn99. 10 disulfide bridges follow: Cys133-Cys141, Cys143-Cys161, Cys217-Cys231, Cys219-Cys226, Cys288-Cys319, Cys304-Cys314, Cys318-Cys358, Cys334-Cys349, Cys336-Cys346, and Cys341-Cys342. A lipid anchor (O-palmitoleoyl serine; by PORCN) is attached at Ser223. N-linked (GlcNAc...) asparagine glycans are attached at residues Asn291 and Asn305.

The protein belongs to the Wnt family. As to quaternary structure, interacts with PORCN. In terms of processing, palmitoleoylation is required for efficient binding to frizzled receptors. Depalmitoleoylation leads to Wnt signaling pathway inhibition.

The protein resides in the secreted. The protein localises to the extracellular space. It is found in the extracellular matrix. Ligand for members of the frizzled family of seven transmembrane receptors. Probable developmental protein. May be a signaling molecule which affects the development of discrete regions of tissues. Is likely to signal over only few cell diameters. The sequence is that of Protein Wnt-5b (Wnt5b) from Mus musculus (Mouse).